A 652-amino-acid chain; its full sequence is tRNA 5-methylaminomethyl-2-thiouridine biosynthesis bifunctional protein MnmC (652 aa).

The tRNA (mnm(5)s(2)U34)-methyltransferase stretch occupies residues 1–227 (MLSWKNDLTP…KREMLTGKYS (227 aa)). The tract at residues 259–652 (IGAGIAGSTL…ARFLYRRIRK (394 aa)) is FAD-dependent cmnm(5)s(2)U34 oxidoreductase.

It in the N-terminal section; belongs to the methyltransferase superfamily. tRNA (mnm(5)s(2)U34)-methyltransferase family. This sequence in the C-terminal section; belongs to the DAO family. The cofactor is FAD.

The protein localises to the cytoplasm. It carries out the reaction 5-aminomethyl-2-thiouridine(34) in tRNA + S-adenosyl-L-methionine = 5-methylaminomethyl-2-thiouridine(34) in tRNA + S-adenosyl-L-homocysteine + H(+). Functionally, catalyzes the last two steps in the biosynthesis of 5-methylaminomethyl-2-thiouridine (mnm(5)s(2)U) at the wobble position (U34) in tRNA. Catalyzes the FAD-dependent demodification of cmnm(5)s(2)U34 to nm(5)s(2)U34, followed by the transfer of a methyl group from S-adenosyl-L-methionine to nm(5)s(2)U34, to form mnm(5)s(2)U34. This is tRNA 5-methylaminomethyl-2-thiouridine biosynthesis bifunctional protein MnmC from Leptospira borgpetersenii serovar Hardjo-bovis (strain JB197).